A 34-amino-acid chain; its full sequence is Photosystem II reaction center protein M (34 aa).

The chain crosses the membrane as a helical span at residues 5–25; the sequence is ILAVIATALFVLIPTAFLLIL.

The protein belongs to the PsbM family. In terms of assembly, PSII is composed of 1 copy each of membrane proteins PsbA, PsbB, PsbC, PsbD, PsbE, PsbF, PsbH, PsbI, PsbJ, PsbK, PsbL, PsbM, PsbT, PsbX, PsbY, PsbZ, Psb30/Ycf12, at least 3 peripheral proteins of the oxygen-evolving complex and a large number of cofactors. It forms dimeric complexes.

Its subcellular location is the plastid. It localises to the chloroplast thylakoid membrane. Its function is as follows. One of the components of the core complex of photosystem II (PSII). PSII is a light-driven water:plastoquinone oxidoreductase that uses light energy to abstract electrons from H(2)O, generating O(2) and a proton gradient subsequently used for ATP formation. It consists of a core antenna complex that captures photons, and an electron transfer chain that converts photonic excitation into a charge separation. This subunit is found at the monomer-monomer interface. This is Photosystem II reaction center protein M from Chaetosphaeridium globosum (Charophycean green alga).